A 201-amino-acid chain; its full sequence is ATP-dependent Clp protease proteolytic subunit (201 aa).

S98 (nucleophile) is an active-site residue. H123 is an active-site residue.

This sequence belongs to the peptidase S14 family. As to quaternary structure, fourteen ClpP subunits assemble into 2 heptameric rings which stack back to back to give a disk-like structure with a central cavity, resembling the structure of eukaryotic proteasomes.

The protein resides in the cytoplasm. It carries out the reaction Hydrolysis of proteins to small peptides in the presence of ATP and magnesium. alpha-casein is the usual test substrate. In the absence of ATP, only oligopeptides shorter than five residues are hydrolyzed (such as succinyl-Leu-Tyr-|-NHMec, and Leu-Tyr-Leu-|-Tyr-Trp, in which cleavage of the -Tyr-|-Leu- and -Tyr-|-Trp bonds also occurs).. Cleaves peptides in various proteins in a process that requires ATP hydrolysis. Has a chymotrypsin-like activity. Plays a major role in the degradation of misfolded proteins. The sequence is that of ATP-dependent Clp protease proteolytic subunit from Rickettsia akari (strain Hartford).